Reading from the N-terminus, the 205-residue chain is Ypt/Rab-type GTPase Rab7 (205 aa).

GTP is bound by residues 17–23, 33–40, G66, 125–128, and 157–159; these read SGVGKTS, FSASYKAT, NKID, and SAK. An Effector region motif is present at residues 37 to 45; it reads YKATIGADF. 2 S-geranylgeranyl cysteine lipidation sites follow: C203 and C205. C205 is modified (cysteine methyl ester).

It belongs to the small GTPase superfamily. Rab family.

It is found in the cell membrane. Alternates between an inactive form bound to GDP and an active form bound to GTP. Activated by guanine nucleotide-exchange factors (GEFs), and inactivated by GTPase-activating proteins (GAPs). Ypt/Rab-type GTPases are key regulators of membrane trafficking and intracellular vesicular transport. They act as molecular switches that convert between GTP-bound and GDP-bound states, and regulate virtually all steps of membrane traffic from the formation of the transport vesicle at the donor membrane to its fusion at the target membrane. In the GDP-bound state, Ypt proteins are predominantly cytosolic, solubilized through the interaction with a GDP dissociation inhibitor (GDI). In the GTP-bound state, the proteins are membrane bound and interact with specific effector proteins that select cargo, promote vesicle movement, or verify the correct site of fusion. The chain is Ypt/Rab-type GTPase Rab7 (gtp-14) from Neurospora crassa (strain ATCC 24698 / 74-OR23-1A / CBS 708.71 / DSM 1257 / FGSC 987).